The primary structure comprises 229 residues: 7-cyano-7-deazaguanine synthase (229 aa).

8–18 serves as a coordination point for ATP; sequence FSGGQDSTTCL. Zn(2+) contacts are provided by cysteine 187, cysteine 196, cysteine 199, and cysteine 202.

The protein belongs to the QueC family. Requires Zn(2+) as cofactor.

It carries out the reaction 7-carboxy-7-deazaguanine + NH4(+) + ATP = 7-cyano-7-deazaguanine + ADP + phosphate + H2O + H(+). The protein operates within purine metabolism; 7-cyano-7-deazaguanine biosynthesis. In terms of biological role, catalyzes the ATP-dependent conversion of 7-carboxy-7-deazaguanine (CDG) to 7-cyano-7-deazaguanine (preQ(0)). In Shewanella halifaxensis (strain HAW-EB4), this protein is 7-cyano-7-deazaguanine synthase.